Consider the following 284-residue polypeptide: D-tagatose-1,6-bisphosphate aldolase subunit GatY (284 aa).

Residue aspartate 82 is the Proton donor of the active site. Zn(2+) contacts are provided by histidine 83 and histidine 180. Glycine 181 provides a ligand contact to dihydroxyacetone phosphate. A Zn(2+)-binding site is contributed by histidine 208. Dihydroxyacetone phosphate contacts are provided by residues 209-211 (GAS) and 230-233 (NVAT).

The protein belongs to the class II fructose-bisphosphate aldolase family. TagBP aldolase GatY subfamily. Forms a complex with GatZ. Zn(2+) serves as cofactor.

It catalyses the reaction D-tagatofuranose 1,6-bisphosphate = D-glyceraldehyde 3-phosphate + dihydroxyacetone phosphate. Its pathway is carbohydrate metabolism; D-tagatose 6-phosphate degradation; D-glyceraldehyde 3-phosphate and glycerone phosphate from D-tagatose 6-phosphate: step 2/2. Functionally, catalytic subunit of the tagatose-1,6-bisphosphate aldolase GatYZ, which catalyzes the reversible aldol condensation of dihydroxyacetone phosphate (DHAP or glycerone-phosphate) with glyceraldehyde 3-phosphate (G3P) to produce tagatose 1,6-bisphosphate (TBP). Requires GatZ subunit for full activity and stability. Is involved in the catabolism of galactitol. The sequence is that of D-tagatose-1,6-bisphosphate aldolase subunit GatY from Escherichia coli (strain 55989 / EAEC).